The primary structure comprises 896 residues: Pentatricopeptide repeat-containing protein At5g03800 (896 aa).

PPR repeat units lie at residues 113–143 (KTRL…LSSP), 144–178 (TVVS…GLVQ), 180–214 (NEYT…GFLN), 215–247 (SVFV…IPQR), 248–278 (DVAS…MNRV), 284–318 (DSFT…GLMQ), 319–349 (ELSV…MMAQ), 350–380 (DAVT…VTEK), 381–415 (NTIT…GVEL), 416–450 (TDFS…GTAF), 451–481 (NPCI…WPSN), 484–519 (SSKA…KLFL), 520–554 (DEVS…GYFS), 555–585 (DISL…MREH), 586–620 (DVIS…EIKP), 621–653 (DIIT…MKTI), and 659–689 (TTEH…MPVQ). The type E motif stretch occupies residues 694 to 769 (VLRALLDSCR…HPAKSWIIHE (76 aa)). The tract at residues 770 to 800 (NKIHSFHARDTSHPQEKDIYRGLEILIMECL) is type E(+) motif. Positions 801-896 (KVGYEPNTEY…NGKCSCRDLW (96 aa)) are type DYW motif.

It belongs to the PPR family. PCMP-H subfamily.

Its function is as follows. May play a role in embryogenesis. The protein is Pentatricopeptide repeat-containing protein At5g03800 (EMB175) of Arabidopsis thaliana (Mouse-ear cress).